A 208-amino-acid polypeptide reads, in one-letter code: 3-demethoxyubiquinol 3-hydroxylase (208 aa).

The Fe cation site is built by Glu-57, Glu-87, His-90, Glu-139, Glu-171, and His-174.

This sequence belongs to the COQ7 family. Fe cation is required as a cofactor.

It localises to the cell membrane. It catalyses the reaction a 5-methoxy-2-methyl-3-(all-trans-polyprenyl)benzene-1,4-diol + AH2 + O2 = a 3-demethylubiquinol + A + H2O. Its pathway is cofactor biosynthesis; ubiquinone biosynthesis. Functionally, catalyzes the hydroxylation of 2-nonaprenyl-3-methyl-6-methoxy-1,4-benzoquinol during ubiquinone biosynthesis. The chain is 3-demethoxyubiquinol 3-hydroxylase from Burkholderia pseudomallei (strain 668).